Reading from the N-terminus, the 484-residue chain is EF-hand calcium-binding domain-containing protein 14 (484 aa).

Disordered stretches follow at residues Met-1–Glu-48, Gly-227–Ser-255, and Glu-313–Asp-395. The segment covering Pro-37–Glu-48 has biased composition (acidic residues). Composition is skewed to polar residues over residues Ser-228–Pro-239, Arg-315–Glu-324, and Leu-335–Ser-347. EF-hand domains follow at residues Ser-423–Leu-452 and Gly-453–Ile-484. 5 residues coordinate Ca(2+): Asp-466, Asn-468, Asp-470, Arg-472, and Glu-477.

This chain is EF-hand calcium-binding domain-containing protein 14 (Efcab14), found in Mus musculus (Mouse).